Here is a 723-residue protein sequence, read N- to C-terminus: ADP-ribosylation factor-binding protein GGA3 (723 aa).

Positions Met1–Asp313 are binds to ARF1 (in long isoform). In terms of domain architecture, VHS spans Ala16 to Ser146. A phosphoserine mark is found at Ser159 and Ser275. Residues Asp171–Glu298 enclose the GAT domain. Residues Gly299–Pro593 form a unstructured hinge region. The tract at residues Ser339–Ser384 is disordered. The span at Ala345–Ser363 shows a compositional bias: pro residues. The segment covering Gly364 to Ala374 has biased composition (low complexity). The DXXLL motif lies at Asp391–Leu395. A disordered region spans residues Asp428–Pro464. The span at Ala441–Ala459 shows a compositional bias: low complexity. Residues Ser594–Pro715 enclose the GAE domain.

The protein belongs to the GGA protein family. As to quaternary structure, monomer. Interacts with GGA1 and GGA2. Binds to clathrin and activated ARFs, such as ARF1, ARF5 and ARF6. Binds RABEP1 and RABGEF1. Interacts with the membrane proteins M6PR/CD-MPR and IGF2R/CI-MPR and the accessory proteins SYNRG, EPN4, NECAP1, NECAP2 and AFTPH/aftiphilin. Interacts with TSG101 and UBC. Interacts with ADRA2B. Interacts with NTRK1; the interaction is independent of NTRK1 activation and ubiquitination. Interacts (via VHS domain) with BACE1 (via DXXLL motif). Phosphorylated by CK2 and dephosphorylated by PP2A. Phosphorylation of GGA3 allows the internal DXXLL motif to bind the VHS domain and to inhibit the recognition of cargo signals. In terms of processing, ubiquitinated. Post-translationally, proteolytically cleaved during apoptosis by CASP3. As to expression, ubiquitously expressed.

It is found in the golgi apparatus. Its subcellular location is the trans-Golgi network membrane. It localises to the endosome membrane. The protein localises to the early endosome membrane. The protein resides in the recycling endosome membrane. In terms of biological role, plays a role in protein sorting and trafficking between the trans-Golgi network (TGN) and endosomes. Mediates the ARF-dependent recruitment of clathrin to the TGN and binds ubiquitinated proteins and membrane cargo molecules with a cytosolic acidic cluster-dileucine (DXXLL) motif. Mediates export of the GPCR receptor ADRA2B to the cell surface. nvolved in BACE1 transport and sorting as well as regulation of BACE1 protein levels. Regulates retrograde transport of BACE1 from endosomes to the trans-Golgi network via interaction through the VHS motif and dependent of BACE1 phosphorylation. Modulates BACE1 protein levels independently of the interaction between VHS domain and DXXLL motif through recognition of ubiquitination. Key player in a novel DXXLL-mediated endosomal sorting machinery to the recycling pathway that targets NTRK1 to the plasma membrane. The chain is ADP-ribosylation factor-binding protein GGA3 from Homo sapiens (Human).